Consider the following 241-residue polypeptide: Large ribosomal subunit protein uL30 (241 aa).

Residues 1-32 form a disordered region; the sequence is MATTLKPETLQKKEKAQQKTAEERAAAKKVRK. Basic and acidic residues predominate over residues 9-26; the sequence is TLQKKEKAQQKTAEERAA.

It belongs to the universal ribosomal protein uL30 family. In terms of assembly, component of the large ribosomal subunit. Mature ribosomes consist of a small (40S) and a large (60S) subunit. The 40S subunit contains about 32 different proteins and 1 molecule of RNA (18S). The 60S subunit contains 45 different proteins and 3 molecules of RNA (25S, 5.8S and 5S).

It is found in the cytoplasm. Functionally, component of the ribosome, a large ribonucleoprotein complex responsible for the synthesis of proteins in the cell. The small ribosomal subunit (SSU) binds messenger RNAs (mRNAs) and translates the encoded message by selecting cognate aminoacyl-transfer RNA (tRNA) molecules. The large subunit (LSU) contains the ribosomal catalytic site termed the peptidyl transferase center (PTC), which catalyzes the formation of peptide bonds, thereby polymerizing the amino acids delivered by tRNAs into a polypeptide chain. The nascent polypeptides leave the ribosome through a tunnel in the LSU and interact with protein factors that function in enzymatic processing, targeting, and the membrane insertion of nascent chains at the exit of the ribosomal tunnel. The protein is Large ribosomal subunit protein uL30 of Candida albicans (strain SC5314 / ATCC MYA-2876) (Yeast).